A 434-amino-acid chain; its full sequence is Serine hydroxymethyltransferase (434 aa).

(6S)-5,6,7,8-tetrahydrofolate-binding positions include Leu124 and 128–130 (GHL). Lys233 is modified (N6-(pyridoxal phosphate)lysine). Residue Glu249 coordinates (6S)-5,6,7,8-tetrahydrofolate.

This sequence belongs to the SHMT family. As to quaternary structure, homodimer. Pyridoxal 5'-phosphate is required as a cofactor.

It is found in the cytoplasm. The enzyme catalyses (6R)-5,10-methylene-5,6,7,8-tetrahydrofolate + glycine + H2O = (6S)-5,6,7,8-tetrahydrofolate + L-serine. It participates in one-carbon metabolism; tetrahydrofolate interconversion. The protein operates within amino-acid biosynthesis; glycine biosynthesis; glycine from L-serine: step 1/1. Functionally, catalyzes the reversible interconversion of serine and glycine with tetrahydrofolate (THF) serving as the one-carbon carrier. This reaction serves as the major source of one-carbon groups required for the biosynthesis of purines, thymidylate, methionine, and other important biomolecules. Also exhibits THF-independent aldolase activity toward beta-hydroxyamino acids, producing glycine and aldehydes, via a retro-aldol mechanism. This chain is Serine hydroxymethyltransferase, found in Synechococcus sp. (strain JA-3-3Ab) (Cyanobacteria bacterium Yellowstone A-Prime).